We begin with the raw amino-acid sequence, 240 residues long: Uridylate kinase (240 aa).

ATP is bound at residue 13 to 16; sequence KFSG. Glycine 55 lines the UMP pocket. Positions 56 and 60 each coordinate ATP. Residues aspartate 76 and 137 to 144 contribute to the UMP site; that span reads TGNPFFTT. 3 residues coordinate ATP: threonine 164, tyrosine 170, and aspartate 173.

It belongs to the UMP kinase family. As to quaternary structure, homohexamer.

The protein resides in the cytoplasm. It catalyses the reaction UMP + ATP = UDP + ADP. It functions in the pathway pyrimidine metabolism; CTP biosynthesis via de novo pathway; UDP from UMP (UMPK route): step 1/1. Its activity is regulated as follows. Inhibited by UTP. In terms of biological role, catalyzes the reversible phosphorylation of UMP to UDP. In Helicobacter pylori (strain J99 / ATCC 700824) (Campylobacter pylori J99), this protein is Uridylate kinase.